A 457-amino-acid chain; its full sequence is Dihydrolipoyl dehydrogenase (457 aa).

FAD-binding positions include 32-40 (EKEYFGGVC), K49, and A113. C40 and C45 are disulfide-bonded. NAD(+) contacts are provided by residues 178 to 182 (GGGVI), V235, and 262 to 265 (SIGR). FAD contacts are provided by D303 and A311. H437 serves as the catalytic Proton acceptor.

It belongs to the class-I pyridine nucleotide-disulfide oxidoreductase family. In terms of assembly, homodimer. FAD serves as cofactor.

It is found in the cytoplasm. It catalyses the reaction N(6)-[(R)-dihydrolipoyl]-L-lysyl-[protein] + NAD(+) = N(6)-[(R)-lipoyl]-L-lysyl-[protein] + NADH + H(+). Lipoamide dehydrogenase is a component of the alpha-ketoacid dehydrogenase complexes. The chain is Dihydrolipoyl dehydrogenase (pdhD) from Mycoplasma pneumoniae (strain ATCC 29342 / M129 / Subtype 1) (Mycoplasmoides pneumoniae).